The following is a 380-amino-acid chain: Cytochrome b (380 aa).

4 consecutive transmembrane segments (helical) span residues 34 to 54, 78 to 99, 114 to 134, and 179 to 199; these read YGSL…FLAM, WLMR…YLHI, WNIG…GYVL, and FFTF…LHLL. Residues His-84 and His-98 each coordinate heme b. Positions 183 and 197 each coordinate heme b. His-202 contacts a ubiquinone. A run of 4 helical transmembrane segments spans residues 227 to 247, 289 to 309, 321 to 341, and 348 to 368; these read YKDT…STTN, LGGV…PSLH, LSQL…WIGG, and FILI…VLLP.

It belongs to the cytochrome b family. The cytochrome bc1 complex contains 3 respiratory subunits (MT-CYB, CYC1 and UQCRFS1), 2 core proteins (UQCRC1 and UQCRC2) and probably 6 low-molecular weight proteins. Requires heme b as cofactor.

It localises to the mitochondrion inner membrane. Its function is as follows. Component of the ubiquinol-cytochrome c reductase complex (complex III or cytochrome b-c1 complex) that is part of the mitochondrial respiratory chain. The b-c1 complex mediates electron transfer from ubiquinol to cytochrome c. Contributes to the generation of a proton gradient across the mitochondrial membrane that is then used for ATP synthesis. The polypeptide is Cytochrome b (mt-cyb) (Typhlonectes natans (Rubber eel)).